Reading from the N-terminus, the 564-residue chain is Phosphomethylpyrimidine synthase (564 aa).

Substrate contacts are provided by residues Asn-203, Met-232, Tyr-261, His-297, 317-319 (SRG), 358-361 (DGLR), and Glu-397. His-401 provides a ligand contact to Zn(2+). Tyr-424 contributes to the substrate binding site. His-465 contributes to the Zn(2+) binding site. Cys-541, Cys-544, and Cys-549 together coordinate [4Fe-4S] cluster.

This sequence belongs to the ThiC family. Requires [4Fe-4S] cluster as cofactor.

The catalysed reaction is 5-amino-1-(5-phospho-beta-D-ribosyl)imidazole + S-adenosyl-L-methionine = 4-amino-2-methyl-5-(phosphooxymethyl)pyrimidine + CO + 5'-deoxyadenosine + formate + L-methionine + 3 H(+). It functions in the pathway cofactor biosynthesis; thiamine diphosphate biosynthesis. In terms of biological role, catalyzes the synthesis of the hydroxymethylpyrimidine phosphate (HMP-P) moiety of thiamine from aminoimidazole ribotide (AIR) in a radical S-adenosyl-L-methionine (SAM)-dependent reaction. The polypeptide is Phosphomethylpyrimidine synthase (Bacteroides fragilis (strain ATCC 25285 / DSM 2151 / CCUG 4856 / JCM 11019 / LMG 10263 / NCTC 9343 / Onslow / VPI 2553 / EN-2)).